An 86-amino-acid chain; its full sequence is Large ribosomal subunit protein bL27 (86 aa).

The interval 1–26 is disordered; the sequence is MATKKAGGSSRNGRDSAGRRLGVKKS.

This sequence belongs to the bacterial ribosomal protein bL27 family.

This is Large ribosomal subunit protein bL27 from Rickettsia akari (strain Hartford).